The following is a 229-amino-acid chain: Clathrin light chain (229 aa).

Disordered regions lie at residues 1–24 (MSQFPALEDFDDGLVTAPVDDSKN) and 76–132 (EMQA…KLRE). Positions 107–132 (EPVRKWKEDQMKRIQERDESSKKLRE) are enriched in basic and acidic residues. Position 229 is a phosphoserine (Ser-229).

The protein belongs to the clathrin light chain family. Clathrin coats are formed from molecules containing 3 heavy chains and 3 light chains.

The protein resides in the cytoplasmic vesicle membrane. It localises to the membrane. It is found in the coated pit. Functionally, clathrin is the major protein of the polyhedral coat of coated pits and vesicles. The chain is Clathrin light chain (clc1) from Schizosaccharomyces pombe (strain 972 / ATCC 24843) (Fission yeast).